The chain runs to 440 residues: MVIFSRSFLALSTTLIILALCINSSTMAQETEDLNSHSSSNSSTANKLPNDDGAWNEHAVKNPEEVAAMVDMKIKNSTERRRLGFFSCATGNPIDDCWRCDRNWHLRRKRLANCAIGFGRNAIGGRDGRYYVVTDPSDHDAVNPRPGTLRHAVIQDRPLWIVFKRDMVITLTQELIMNSFKTIDGRGVNVAIAGGACITIQYVTNIIIHGINVHDCRRTGNAMVRSSPSHYGWRTMADGDAISIFGSSHIWIDHNSLSNCADGLIDAIMGSTAITISNNYMTHHNEVMLMGHSDSYTRDKLMQVTIAYNHFGEGLIQRMPRCRHGYFHVVNNDYTHWVMYAIGGSANPTINSQGNRFLAPGNPFAKEVTKRVGSWQGEWKQWNWRSQGDLMLNGAYFTKSGAAAPASYARASSLGAKPASVVSMLTYSSGALKCRIGMRC.

A signal peptide spans 1–28 (MVIFSRSFLALSTTLIILALCINSSTMA). The interval 32 to 56 (EDLNSHSSSNSSTANKLPNDDGAWN) is disordered. N-linked (GlcNAc...) asparagine glycosylation is found at N41 and N76. Ca(2+) contacts are provided by D238, D262, and D266. Residue R318 is part of the active site.

This sequence belongs to the polysaccharide lyase 1 family. It depends on Ca(2+) as a cofactor.

It catalyses the reaction Eliminative cleavage of (1-&gt;4)-alpha-D-galacturonan to give oligosaccharides with 4-deoxy-alpha-D-galact-4-enuronosyl groups at their non-reducing ends.. It functions in the pathway glycan metabolism; pectin degradation; 2-dehydro-3-deoxy-D-gluconate from pectin: step 2/5. The chain is Probable pectate lyase 10 from Arabidopsis thaliana (Mouse-ear cress).